The sequence spans 620 residues: Protein AFR1 (620 aa).

Over residues 1-12 (MEGSYLSAQENQ) the composition is skewed to polar residues. The tract at residues 1–20 (MEGSYLSAQENQPIPERLIP) is disordered. Phosphoserine is present on residues S472 and S526.

This sequence to yeast YER158C.

In terms of biological role, acts in conjunction with the alpha-factor receptor to promote morphogenesis and adaptation. This Saccharomyces cerevisiae (strain ATCC 204508 / S288c) (Baker's yeast) protein is Protein AFR1 (AFR1).